Consider the following 245-residue polypeptide: Zinc finger protein 575 (245 aa).

A disordered region spans residues methionine 1 to aspartate 67. The segment covering proline 36–serine 49 has biased composition (low complexity). A compositionally biased stretch (basic residues) spans arginine 52–histidine 63. 6 C2H2-type zinc fingers span residues histidine 63–histidine 85, histidine 91–histidine 113, histidine 119–histidine 141, tyrosine 147–histidine 169, tyrosine 177–histidine 199, and histidine 213–histidine 240.

This sequence belongs to the krueppel C2H2-type zinc-finger protein family.

The protein localises to the nucleus. In terms of biological role, may be involved in transcriptional regulation. The polypeptide is Zinc finger protein 575 (ZNF575) (Homo sapiens (Human)).